The following is a 503-amino-acid chain: ATP synthase subunit alpha (503 aa).

170 to 177 (GDRQTGKT) lines the ATP pocket.

It belongs to the ATPase alpha/beta chains family. In terms of assembly, F-type ATPases have 2 components, CF(1) - the catalytic core - and CF(0) - the membrane proton channel. CF(1) has five subunits: alpha(3), beta(3), gamma(1), delta(1), epsilon(1). CF(0) has three main subunits: a(1), b(2) and c(9-12). The alpha and beta chains form an alternating ring which encloses part of the gamma chain. CF(1) is attached to CF(0) by a central stalk formed by the gamma and epsilon chains, while a peripheral stalk is formed by the delta and b chains.

The protein resides in the cell inner membrane. The enzyme catalyses ATP + H2O + 4 H(+)(in) = ADP + phosphate + 5 H(+)(out). Functionally, produces ATP from ADP in the presence of a proton gradient across the membrane. The alpha chain is a regulatory subunit. The polypeptide is ATP synthase subunit alpha (Geobacter metallireducens (strain ATCC 53774 / DSM 7210 / GS-15)).